Reading from the N-terminus, the 285-residue chain is Release factor glutamine methyltransferase (285 aa).

S-adenosyl-L-methionine-binding residues include aspartate 143 and asparagine 189. Position 189-192 (189-192 (NPPY)) interacts with substrate.

This sequence belongs to the protein N5-glutamine methyltransferase family. PrmC subfamily.

It carries out the reaction L-glutaminyl-[peptide chain release factor] + S-adenosyl-L-methionine = N(5)-methyl-L-glutaminyl-[peptide chain release factor] + S-adenosyl-L-homocysteine + H(+). Its function is as follows. Methylates the class 1 translation termination release factors RF1/PrfA and RF2/PrfB on the glutamine residue of the universally conserved GGQ motif. This is Release factor glutamine methyltransferase from Clostridium acetobutylicum (strain ATCC 824 / DSM 792 / JCM 1419 / IAM 19013 / LMG 5710 / NBRC 13948 / NRRL B-527 / VKM B-1787 / 2291 / W).